The following is a 506-amino-acid chain: Glutamate--tRNA ligase (506 aa).

The 'HIGH' region signature appears at 12–22 (PSPTGDPHVGT). The 'KMSKS' region motif lies at 253-257 (KLSKR). Lys256 serves as a coordination point for ATP.

The protein belongs to the class-I aminoacyl-tRNA synthetase family. Glutamate--tRNA ligase type 1 subfamily. In terms of assembly, monomer.

The protein resides in the cytoplasm. The enzyme catalyses tRNA(Glu) + L-glutamate + ATP = L-glutamyl-tRNA(Glu) + AMP + diphosphate. Functionally, catalyzes the attachment of glutamate to tRNA(Glu) in a two-step reaction: glutamate is first activated by ATP to form Glu-AMP and then transferred to the acceptor end of tRNA(Glu). The sequence is that of Glutamate--tRNA ligase from Chlamydia trachomatis serovar A (strain ATCC VR-571B / DSM 19440 / HAR-13).